A 249-amino-acid chain; its full sequence is Caffeoyl-CoA O-methyltransferase 1 (249 aa).

K23 serves as a coordination point for substrate. S-adenosyl-L-methionine-binding positions include T65, E87, 89–90 (GV), S95, D113, and A142. A substrate-binding site is contributed by D165. An a divalent metal cation-binding site is contributed by D165. S-adenosyl-L-methionine is bound at residue D167. A divalent metal cation-binding residues include D191 and N192. N196 contacts substrate.

The protein belongs to the class I-like SAM-binding methyltransferase superfamily. Cation-dependent O-methyltransferase family. CCoAMT subfamily. It depends on a divalent metal cation as a cofactor. Mostly expressed in petal limbs and tubes, and, at low levels, in flower buds, stamens, pistils, stems, roots and leaves.

The protein resides in the cytoplasm. It localises to the cytosol. The catalysed reaction is (E)-caffeoyl-CoA + S-adenosyl-L-methionine = (E)-feruloyl-CoA + S-adenosyl-L-homocysteine + H(+). It catalyses the reaction (E)-5-hydroxyferuloyl-CoA + S-adenosyl-L-methionine = (E)-sinapoyl-CoA + S-adenosyl-L-homocysteine + H(+). Its pathway is aromatic compound metabolism; phenylpropanoid biosynthesis. Its function is as follows. Involved in the production of floral volatile phenylpropanoids in flowers of fragrant cultivars (e.g. cv. Mitchell and cv. V26) from cinnamic acid, a common precursor with the anthocyanin biosynthesis pathway involved in flower pigmentation. Methylates caffeoyl-CoA to feruloyl-CoA, also able to methylate 5-hydroxyferuloyl-CoA. This Petunia hybrida (Petunia) protein is Caffeoyl-CoA O-methyltransferase 1.